The chain runs to 345 residues: Phosphoribosylformylglycinamidine cyclo-ligase (345 aa).

Belongs to the AIR synthase family.

It localises to the cytoplasm. It carries out the reaction 2-formamido-N(1)-(5-O-phospho-beta-D-ribosyl)acetamidine + ATP = 5-amino-1-(5-phospho-beta-D-ribosyl)imidazole + ADP + phosphate + H(+). The protein operates within purine metabolism; IMP biosynthesis via de novo pathway; 5-amino-1-(5-phospho-D-ribosyl)imidazole from N(2)-formyl-N(1)-(5-phospho-D-ribosyl)glycinamide: step 2/2. This is Phosphoribosylformylglycinamidine cyclo-ligase from Pectobacterium atrosepticum (strain SCRI 1043 / ATCC BAA-672) (Erwinia carotovora subsp. atroseptica).